A 259-amino-acid polypeptide reads, in one-letter code: Proteasome subunit alpha (259 aa).

Residues 226–259 form a disordered region; sequence LAEGSATSATSATPGEAEAPATAPEGDVDTGSNG. The span at 227–250 shows a compositional bias: low complexity; that stretch reads AEGSATSATSATPGEAEAPATAPE.

It belongs to the peptidase T1A family. As to quaternary structure, the 20S proteasome core is composed of 14 alpha and 14 beta subunits that assemble into four stacked heptameric rings, resulting in a barrel-shaped structure. The two inner rings, each composed of seven catalytic beta subunits, are sandwiched by two outer rings, each composed of seven alpha subunits. The catalytic chamber with the active sites is on the inside of the barrel. Has a gated structure, the ends of the cylinder being occluded by the N-termini of the alpha-subunits. Is capped by the proteasome-associated ATPase, ARC.

It localises to the cytoplasm. The protein operates within protein degradation; proteasomal Pup-dependent pathway. Its activity is regulated as follows. The formation of the proteasomal ATPase ARC-20S proteasome complex, likely via the docking of the C-termini of ARC into the intersubunit pockets in the alpha-rings, may trigger opening of the gate for substrate entry. Interconversion between the open-gate and close-gate conformations leads to a dynamic regulation of the 20S proteasome proteolysis activity. Functionally, component of the proteasome core, a large protease complex with broad specificity involved in protein degradation. This is Proteasome subunit alpha from Streptosporangium roseum (strain ATCC 12428 / DSM 43021 / JCM 3005 / KCTC 9067 / NCIMB 10171 / NRRL 2505 / NI 9100).